A 460-amino-acid polypeptide reads, in one-letter code: Phosphomethylpyrimidine synthase (460 aa).

Substrate-binding positions include N80, M109, Y139, H175, 195 to 197 (SRG), 236 to 239 (DSLR), and E275. A Zn(2+)-binding site is contributed by H279. Y302 lines the substrate pocket. H343 is a Zn(2+) binding site. [4Fe-4S] cluster-binding residues include C423, C426, and C431.

Belongs to the ThiC family. Requires [4Fe-4S] cluster as cofactor.

It carries out the reaction 5-amino-1-(5-phospho-beta-D-ribosyl)imidazole + S-adenosyl-L-methionine = 4-amino-2-methyl-5-(phosphooxymethyl)pyrimidine + CO + 5'-deoxyadenosine + formate + L-methionine + 3 H(+). The protein operates within cofactor biosynthesis; thiamine diphosphate biosynthesis. In terms of biological role, catalyzes the synthesis of the hydroxymethylpyrimidine phosphate (HMP-P) moiety of thiamine from aminoimidazole ribotide (AIR) in a radical S-adenosyl-L-methionine (SAM)-dependent reaction. The protein is Phosphomethylpyrimidine synthase of Rippkaea orientalis (strain PCC 8801 / RF-1) (Cyanothece sp. (strain PCC 8801)).